Reading from the N-terminus, the 154-residue chain is Myoglobin (154 aa).

Residues G2–K148 form the Globin domain. S4 is modified (phosphoserine). Residue H65 coordinates nitrite. Residue H65 coordinates O2. Position 68 is a phosphothreonine (T68). H94 contributes to the heme b binding site.

It belongs to the globin family. As to quaternary structure, monomeric.

The protein localises to the cytoplasm. Its subcellular location is the sarcoplasm. It catalyses the reaction Fe(III)-heme b-[protein] + nitric oxide + H2O = Fe(II)-heme b-[protein] + nitrite + 2 H(+). The enzyme catalyses H2O2 + AH2 = A + 2 H2O. Its function is as follows. Monomeric heme protein which primary function is to store oxygen and facilitate its diffusion within muscle tissues. Reversibly binds oxygen through a pentacoordinated heme iron and enables its timely and efficient release as needed during periods of heightened demand. Depending on the oxidative conditions of tissues and cells, and in addition to its ability to bind oxygen, it also has a nitrite reductase activity whereby it regulates the production of bioactive nitric oxide. Under stress conditions, like hypoxia and anoxia, it also protects cells against reactive oxygen species thanks to its pseudoperoxidase activity. This Nycticebus coucang (Slow loris) protein is Myoglobin (MB).